Here is a 595-residue protein sequence, read N- to C-terminus: Chaperone protein HscA homolog (595 aa).

It belongs to the heat shock protein 70 family.

In terms of biological role, chaperone involved in the maturation of iron-sulfur cluster-containing proteins. Has a low intrinsic ATPase activity which is markedly stimulated by HscB. The chain is Chaperone protein HscA homolog from Rickettsia peacockii (strain Rustic).